Reading from the N-terminus, the 266-residue chain is 14-3-3 protein homolog (266 aa).

The tract at residues 154–177 is disordered; the sequence is KQAADQAQESYQKATETAEGHSPA. Residues 158–168 are compositionally biased toward polar residues; that stretch reads DQAQESYQKAT.

Belongs to the 14-3-3 family.

The sequence is that of 14-3-3 protein homolog from Neospora caninum (Coccidian parasite).